An 85-amino-acid chain; its full sequence is Small ribosomal subunit protein uS17 (85 aa).

It belongs to the universal ribosomal protein uS17 family. In terms of assembly, part of the 30S ribosomal subunit.

Functionally, one of the primary rRNA binding proteins, it binds specifically to the 5'-end of 16S ribosomal RNA. This Aggregatibacter actinomycetemcomitans (Actinobacillus actinomycetemcomitans) protein is Small ribosomal subunit protein uS17.